The chain runs to 432 residues: Gamma-glutamyl phosphate reductase (432 aa).

The protein belongs to the gamma-glutamyl phosphate reductase family.

The protein resides in the cytoplasm. It carries out the reaction L-glutamate 5-semialdehyde + phosphate + NADP(+) = L-glutamyl 5-phosphate + NADPH + H(+). It functions in the pathway amino-acid biosynthesis; L-proline biosynthesis; L-glutamate 5-semialdehyde from L-glutamate: step 2/2. Catalyzes the NADPH-dependent reduction of L-glutamate 5-phosphate into L-glutamate 5-semialdehyde and phosphate. The product spontaneously undergoes cyclization to form 1-pyrroline-5-carboxylate. This chain is Gamma-glutamyl phosphate reductase, found in Corynebacterium melassecola.